Reading from the N-terminus, the 133-residue chain is Magnetosome protein MamC (133 aa).

Residues methionine 1 to asparagine 5 lie on the Cytoplasmic side of the membrane. A helical membrane pass occupies residues leucine 6 to glycine 26. The Lumenal portion of the chain corresponds to serine 27–tyrosine 67. Residues lysine 37 to glycine 57 are magnetite interacting component (MIC) binds magnetite. Residues alanine 68–valine 88 form a helical membrane-spanning segment. Residues alanine 89 to proline 133 are Cytoplasmic-facing. Residues leucine 105 to proline 133 are disordered.

This sequence belongs to the magnetosome MamC family. As to quaternary structure, probably interacts with MamA.

Its subcellular location is the magnetosome membrane. In terms of biological role, probably helps control the size of magnetite crystals; in vitro synthesis of magnetite yields larger and more well-developed magnetite crystals in the presence of purified MamC. Binds Fe(3+). The lumenal domain probably binds magnetite crystals, affecting crystal size and shape. Purified MamC self-assembles into micelles in the presence of ferric chloride hexahydrate (FeCl(3).6H(2)O); both oxygen and iron are present in the proteinaceous micelles. Whether this is relevant in vivo is unknown. This is Magnetosome protein MamC from Magnetococcus marinus (strain ATCC BAA-1437 / JCM 17883 / MC-1).